A 310-amino-acid chain; its full sequence is Phosphoribosylaminoimidazole-succinocarboxamide synthase (310 aa).

The protein belongs to the SAICAR synthetase family.

It catalyses the reaction 5-amino-1-(5-phospho-D-ribosyl)imidazole-4-carboxylate + L-aspartate + ATP = (2S)-2-[5-amino-1-(5-phospho-beta-D-ribosyl)imidazole-4-carboxamido]succinate + ADP + phosphate + 2 H(+). It participates in purine metabolism; IMP biosynthesis via de novo pathway; 5-amino-1-(5-phospho-D-ribosyl)imidazole-4-carboxamide from 5-amino-1-(5-phospho-D-ribosyl)imidazole-4-carboxylate: step 1/2. This chain is Phosphoribosylaminoimidazole-succinocarboxamide synthase, found in Xanthomonas oryzae pv. oryzae (strain MAFF 311018).